The chain runs to 297 residues: Transmembrane protein 178A (297 aa).

Residues 1–25 (MEPRALVTALSLGLSLCSLGLLVTA) form the signal peptide. Residues 26-179 (IFTDHWYETD…LLHLRRITAG (154 aa)) are Extracellular-facing. Over residues 41 to 57 (ESCERSRAGADPPDQKN) the composition is skewed to basic and acidic residues. Residues 41 to 86 (ESCERSRAGADPPDQKNRLMPLSHLPLRDSPPLGRRLLPGGPGRSD) are disordered. The span at 68-79 (RDSPPLGRRLLP) shows a compositional bias: low complexity. Residue Asn-158 is glycosylated (N-linked (GlcNAc...) asparagine). Residues 180-200 (FLGMAVAVLLCGCIVATVSFF) traverse the membrane as a helical segment. Residues 201-208 (WEESLTQH) are Cytoplasmic-facing. Residues 209–229 (VAGLLFLMTGIFCTISLCTYA) traverse the membrane as a helical segment. At 230 to 257 (ASVSYDLNRVPKLIYSLPHDVEHGYSWS) the chain is on the extracellular side. A helical transmembrane segment spans residues 258–278 (IFCAWCSLGFIVAAGGLCIAY). Topologically, residues 279 to 297 (PFISRTKIAHLKSGRDSTV) are cytoplasmic.

The protein belongs to the TMEM178 family. Interacts with STIM1.

The protein resides in the endoplasmic reticulum membrane. Its function is as follows. Acts as a negative regulator of osteoclast differentiation in basal and inflammatory conditions by regulating TNFSF11-induced Ca (2+) fluxes, thereby controlling the induction of NFATC1. This Rattus norvegicus (Rat) protein is Transmembrane protein 178A (Tmem178a).